The primary structure comprises 500 residues: MNYFPWLTIIVVFPIFAGSLIFFLPHKGNRVIRWYTICICILELLLTTYAFCYHFQSDDPLIQLVEDYKWIDFFDFHWRLGIDGLSIGPILLTGFITTLATLAAWPVTRDSRLFHFLMLAMYSGQIGSFSSRDLLLFFIMWELELIPVYLLLAMWGGKKRLYSATKFILYTAGGSVFLLMGVLGVALYGSNEPTLNFETSVNQSYPVVLEIIFYIGFFIAFAVKSPIIPLHTWLPDTHGEAHYSTCMLLAGILLKMGAYGLIRINMELLPHAHSIFSPWLMIIGTIQIIYAASTSLGQRNLKKRIAYPSVSHMGFIIIGISSLTDTGLNGALLQIISHGFIGAALFFLAGTTYDRIRLVYLDEMGGIAIPMPKMFTMFSSFSMASLALPGMSGFVAELIVFFGIITGQKYLLIPKLLITFVMAIGIILTPIYSLSMPRQMFYGYKLFNAPKDSFFDSGPRELFLSISIFLPVIGIGIYPDFVLSLAVDKVEVILSNFFYR.

13 helical membrane passes run 4–24, 35–55, 87–107, 134–154, 167–187, 208–228, 242–262, 272–292, 305–325, 330–350, 386–406, 411–431, and 462–482; these read FPWL…IFFL, YTIC…CYHF, IGPI…AWPV, LLLF…LLAM, FILY…GVAL, VLEI…SPII, HYST…YGLI, AHSI…IYAA, IAYP…SLTD, GALL…FLAG, LALP…GIIT, LLIP…LTPI, and LFLS…PDFV.

This sequence belongs to the complex I subunit 4 family.

It localises to the plastid. It is found in the chloroplast thylakoid membrane. The catalysed reaction is a plastoquinone + NADH + (n+1) H(+)(in) = a plastoquinol + NAD(+) + n H(+)(out). The enzyme catalyses a plastoquinone + NADPH + (n+1) H(+)(in) = a plastoquinol + NADP(+) + n H(+)(out). The polypeptide is NAD(P)H-quinone oxidoreductase chain 4, chloroplastic (Solanum tuberosum (Potato)).